Here is a 425-residue protein sequence, read N- to C-terminus: Protein disulfide isomerase-like 5-3 (425 aa).

Positions 1 to 28 are cleaved as a signal peptide; that stretch reads MGKPTLPPVVVVVVLLLLVVVLPATTCG. The region spanning 29-153 is the Thioredoxin domain; it reads ADAGGGGEAE…LVENLKKLVA (125 aa). Residues Cys-75 and Cys-78 each act as nucleophile in the active site. Cysteines 75 and 78 form a disulfide. The helical transmembrane segment at 386–406 threads the bilayer; that stretch reads LLGVNAVYILVFLVAVLVLLM.

This sequence belongs to the protein disulfide isomerase family.

It is found in the membrane. Functionally, acts as a protein-folding catalyst that interacts with nascent polypeptides to catalyze the formation, isomerization, and reduction or oxidation of disulfide bonds. May play a role in storage protein biogenesis. In Oryza sativa subsp. japonica (Rice), this protein is Protein disulfide isomerase-like 5-3 (PDIL5-3).